A 504-amino-acid polypeptide reads, in one-letter code: L-amino-acid oxidase (504 aa).

An N-terminal signal peptide occupies residues 1-18 (MNVFFMFSLLFLATLGSC). Cys-28 and Cys-191 are joined by a disulfide. FAD is bound by residues 61 to 62 (MS), 81 to 82 (EA), Arg-89, and 105 to 108 (GPMR). Position 108 (Arg-108) interacts with substrate. N-linked (GlcNAc...) asparagine glycosylation is present at Asn-190. His-241 is a binding site for substrate. Val-279 contacts FAD. Cys-349 and Cys-430 are joined by a disulfide. Asn-379 is a glycosylation site (N-linked (GlcNAc...) asparagine). Tyr-390 contributes to the substrate binding site. FAD is bound by residues Glu-475 and 482-487 (GWIDST). 482–483 (GW) provides a ligand contact to substrate.

Belongs to the flavin monoamine oxidase family. FIG1 subfamily. Homodimer; non-covalently linked. FAD is required as a cofactor. As to expression, expressed by the venom gland.

The protein localises to the secreted. The catalysed reaction is an L-alpha-amino acid + O2 + H2O = a 2-oxocarboxylate + H2O2 + NH4(+). The enzyme catalyses L-leucine + O2 + H2O = 4-methyl-2-oxopentanoate + H2O2 + NH4(+). It catalyses the reaction L-phenylalanine + O2 + H2O = 3-phenylpyruvate + H2O2 + NH4(+). It carries out the reaction L-tryptophan + O2 + H2O = indole-3-pyruvate + H2O2 + NH4(+). The catalysed reaction is L-methionine + O2 + H2O = 4-methylsulfanyl-2-oxobutanoate + H2O2 + NH4(+). The enzyme catalyses L-tyrosine + O2 + H2O = 3-(4-hydroxyphenyl)pyruvate + H2O2 + NH4(+). Catalyzes an oxidative deamination of predominantly hydrophobic and aromatic L-amino acids, thus producing hydrogen peroxide that may contribute to the diverse toxic effects of this enzyme. Is highly active on L-Tyr followed by L-Phe, L-Met, L-Leu, L-Trp, and weakly active on L-Ile, L-Arg, L-Val, L-Lys, and L-Ala. Inhibits ADP- and collagen-induced platelet aggregation. This inhibition is inhibited by catalase, indicating the importance of generated H(2)O(2) for the inhibitory effect. This effect on platelets among snake L-amino-acid oxidases is however controversial, since some of them induce aggregation, whereas the other inhibit agonist-induced aggregation. In vivo, this enzyme induces a rapid, substantial and reversible increase in the paw volume of mice (edema). In addition, myofibrosis, and inflammatory cell infiltration on the paw tissue are also observed. The chain is L-amino-acid oxidase from Daboia russelii (Russel's viper).